The primary structure comprises 559 residues: Probable 2-ketoarginine decarboxylase AruI (559 aa).

Thiamine diphosphate is bound at residue glutamate 76.

This sequence belongs to the TPP enzyme family. Thiamine diphosphate serves as cofactor.

The catalysed reaction is 5-guanidino-2-oxopentanoate + H(+) = 4-guanidinobutanal + CO2. The protein operates within amino-acid degradation; L-arginine degradation. Functionally, catalyzes the decarboxylation of 2-ketoarginine, leading to the formation of 4-guanidinobutyraldehyde. The polypeptide is Probable 2-ketoarginine decarboxylase AruI (aruI) (Pseudomonas aeruginosa (strain ATCC 15692 / DSM 22644 / CIP 104116 / JCM 14847 / LMG 12228 / 1C / PRS 101 / PAO1)).